A 308-amino-acid polypeptide reads, in one-letter code: Putative S-adenosyl-L-methionine-dependent methyltransferase Mb3816c (308 aa).

S-adenosyl-L-methionine is bound by residues Asp-131 and 160–161 (DL).

It belongs to the UPF0677 family.

Exhibits S-adenosyl-L-methionine-dependent methyltransferase activity. This Mycobacterium bovis (strain ATCC BAA-935 / AF2122/97) protein is Putative S-adenosyl-L-methionine-dependent methyltransferase Mb3816c.